We begin with the raw amino-acid sequence, 361 residues long: U7 snRNA-associated Sm-like protein LSm11 (361 aa).

The segment at 1–26 (MEEREWGARSARAGSPASPPSPRLDV) is disordered. Residues S15 and S21 each carry the phosphoserine modification. The residue at position 41 (R41) is an Omega-N-methylarginine. The interval 67–142 (RTGRGRARGT…QGPGRSKKAP (76 aa)) is disordered. A compositionally biased stretch (low complexity) spans 76-96 (TGEPASAGTSTGTSTGAGSSS). K121 is covalently cross-linked (Glycyl lysine isopeptide (Lys-Gly) (interchain with G-Cter in SUMO2)). The residue at position 155 (S155) is a Phosphoserine. Positions 155–230 (SPLGELHRCI…LTLTRLFDRL (76 aa)) constitute a Sm domain. An SM 1 region spans residues 172–205 (VHIRTFKGLRGVCTGFLVAFDKFWNMALTDVDET). A disordered region spans residues 268–335 (RGDTDRSSHR…RKKKRKPKVD (68 aa)). A Phosphoserine modification is found at S281. Over residues 307–323 (GSSVGGTFSRATTLSRG) the composition is skewed to polar residues. The tract at residues 344 to 357 (INQIFIRGENVLLV) is SM 2.

It belongs to the snRNP Sm proteins family. In terms of assembly, component of the heptameric ring U7 snRNP complex, or U7 Sm protein core complex, at least composed of LSM10, LSM11, SNRPB, SNRPD3, SNRPE, SNRPF, SNRPG and U7 snRNA. Formation of the U7 snRNP is an ATP-dependent process mediated by a specialized SMN complex containing at least the Sm protein core complex and additionally, the U7-specific LSM10 and LSM11 proteins. Identified in a histone pre-mRNA complex, at least composed of ERI1, LSM11, SLBP, SNRPB, SYNCRIP and YBX1. Interacts (via the Sm domains) with CLNS1A. Interacts with PRMT5, SMN, ZNF473 and WDR77. In terms of processing, not methylated.

It localises to the nucleus. Functionally, component of the U7 snRNP complex that is involved in the histone 3'-end pre-mRNA processing. Increases U7 snRNA levels but not histone 3'-end pre-mRNA processing activity, when overexpressed. Required for cell cycle progression from G1 to S phases. Binds specifically to the Sm-binding site of U7 snRNA. This Mus musculus (Mouse) protein is U7 snRNA-associated Sm-like protein LSm11.